Consider the following 439-residue polypeptide: Polygalacturonase QRT2 (439 aa).

Positions 1–21 are cleaved as a signal peptide; that stretch reads MYEKIIILSVFLLTFLPSCFS. A disordered region spans residues 43 to 69; the sequence is RQHQHGHNTRNSHLKNRHGYAPRSSPR. The segment covering 44 to 62 has biased composition (basic residues); sequence QHQHGHNTRNSHLKNRHGY. 2 PbH1 repeats span residues 201–250 and 251–272; these read CNNL…HVSG and TQNI…SIVS. Aspartate 265 (proton donor) is an active-site residue. Histidine 288 is an active-site residue. PbH1 repeat units follow at residues 304–325 and 333–354; these read VSNV…RIKT and AKNI…IINQ.

This sequence belongs to the glycosyl hydrolase 28 family. Expressed predominantly in roots with lower expression levels in rosette leaves, flower buds and siliques. Bearly detected in seeds. Found in flowers undergoing floral organ abscission. Also expressed early in anther development, at the time of microspore separation.

It localises to the secreted. The protein localises to the cell wall. The enzyme catalyses (1,4-alpha-D-galacturonosyl)n+m + H2O = (1,4-alpha-D-galacturonosyl)n + (1,4-alpha-D-galacturonosyl)m.. In terms of biological role, polygalacturonase required for cell type-specific pectin degradation to separate microspores. Involved in anther dehiscence and floral organ abscission. This is Polygalacturonase QRT2 (QRT2) from Arabidopsis thaliana (Mouse-ear cress).